We begin with the raw amino-acid sequence, 210 residues long: Large ribosomal subunit protein uL16 (210 aa).

Belongs to the universal ribosomal protein uL16 family. As to quaternary structure, component of the large ribosomal subunit. Mature ribosomes consist of a small (40S) and a large (60S) subunit. The 40S subunit contains about 33 different proteins and 1 molecule of RNA (18S). The 60S subunit contains about 49 different proteins and 3 molecules of RNA (28S, 5.8S and 5S).

It is found in the cytoplasm. Functionally, component of the large ribosomal subunit. Plays a role in the formation of actively translating ribosomes. Its function is as follows. (Microbial infection) Seems to bind to the leucine zipper of viral and cellular JUN. The sequence is that of Large ribosomal subunit protein uL16 from Gallus gallus (Chicken).